Here is a 425-residue protein sequence, read N- to C-terminus: Gamma-glutamyl phosphate reductase (425 aa).

This sequence belongs to the gamma-glutamyl phosphate reductase family.

It is found in the cytoplasm. It catalyses the reaction L-glutamate 5-semialdehyde + phosphate + NADP(+) = L-glutamyl 5-phosphate + NADPH + H(+). The protein operates within amino-acid biosynthesis; L-proline biosynthesis; L-glutamate 5-semialdehyde from L-glutamate: step 2/2. Catalyzes the NADPH-dependent reduction of L-glutamate 5-phosphate into L-glutamate 5-semialdehyde and phosphate. The product spontaneously undergoes cyclization to form 1-pyrroline-5-carboxylate. The polypeptide is Gamma-glutamyl phosphate reductase (Aromatoleum aromaticum (strain DSM 19018 / LMG 30748 / EbN1) (Azoarcus sp. (strain EbN1))).